Here is a 231-residue protein sequence, read N- to C-terminus: Heptaprenylglyceryl phosphate synthase (231 aa).

K12 is a sn-glycerol 1-phosphate binding site. Positions 14 and 40 each coordinate Mg(2+). Residues 159-164, G189, and 209-210 each bind sn-glycerol 1-phosphate; these read YLEYSG and GN.

Belongs to the GGGP/HepGP synthase family. Group I subfamily. Homodimer. Mg(2+) serves as cofactor.

The enzyme catalyses sn-glycerol 1-phosphate + all-trans-heptaprenyl diphosphate = 3-heptaprenyl-sn-glycero-1-phosphate + diphosphate. Its pathway is membrane lipid metabolism; glycerophospholipid metabolism. Its function is as follows. Prenyltransferase that catalyzes in vivo the transfer of the heptaprenyl moiety of heptaprenyl pyrophosphate (HepPP; 35 carbon atoms) to the C3 hydroxyl of sn-glycerol-1-phosphate (G1P), producing heptaprenylglyceryl phosphate (HepGP). This reaction is an ether-bond-formation step in the biosynthesis of archaea-type G1P-based membrane lipids found in Bacillales. The sequence is that of Heptaprenylglyceryl phosphate synthase from Staphylococcus haemolyticus (strain JCSC1435).